Consider the following 453-residue polypeptide: MLDILILAAGKGTRMRSDLPKVLHPIGGKPLVQHVVDTARQVGGEQLLLIVGHGAEQVEQRMAAPDVKFVVQAQQLGTGHAVQQALPHLRPEATVLILYGDVPLTRAATLQKLVAGVTDQQMALLTVDLPDPSGYGRIVRDTSGAVVAIVEHKDASDEQRLICEINTGIMAVKARHLQQWLPRLGNNNAQGEYYLTDIIAMAKADGVAIHVEQPGAIQEVEGINNRQQQATLERYYQQQQARALMDAGVTLLDPARFDCRGNLSAGRDVVIDINCVIEGEVVLGDGVVIEPNCIIINSKIGNNTHIKAFSHIEDAVIAADCDIGPYARLRPGTNLADAVKIGNFVETKKAVIAKGSKVNHLSYIGDARVGSGVNVGAGTITCNYDGVNKFKTEIGDNAFIGSNSALVAPVNIGAGATVGAGSVITRDVDAAELAVARGKQRNIQGWERPTRKS.

Residues 1–226 (MLDILILAAG…IQEVEGINNR (226 aa)) are pyrophosphorylase. Residues 7–10 (LAAG), lysine 21, glutamine 72, 77–78 (GT), 99–101 (YGD), glycine 136, glutamate 151, asparagine 166, and asparagine 224 each bind UDP-N-acetyl-alpha-D-glucosamine. Aspartate 101 is a binding site for Mg(2+). Asparagine 224 is a Mg(2+) binding site. The tract at residues 227 to 247 (QQQATLERYYQQQQARALMDA) is linker. Residues 248–453 (GVTLLDPARF…QGWERPTRKS (206 aa)) form an N-acetyltransferase region. UDP-N-acetyl-alpha-D-glucosamine is bound by residues arginine 330 and lysine 348. Residue histidine 360 is the Proton acceptor of the active site. The UDP-N-acetyl-alpha-D-glucosamine site is built by tyrosine 363 and asparagine 374. Residues alanine 377, 383 to 384 (NY), serine 402, alanine 420, and arginine 437 each bind acetyl-CoA.

It in the N-terminal section; belongs to the N-acetylglucosamine-1-phosphate uridyltransferase family. The protein in the C-terminal section; belongs to the transferase hexapeptide repeat family. In terms of assembly, homotrimer. It depends on Mg(2+) as a cofactor.

It localises to the cytoplasm. It catalyses the reaction alpha-D-glucosamine 1-phosphate + acetyl-CoA = N-acetyl-alpha-D-glucosamine 1-phosphate + CoA + H(+). It carries out the reaction N-acetyl-alpha-D-glucosamine 1-phosphate + UTP + H(+) = UDP-N-acetyl-alpha-D-glucosamine + diphosphate. The protein operates within nucleotide-sugar biosynthesis; UDP-N-acetyl-alpha-D-glucosamine biosynthesis; N-acetyl-alpha-D-glucosamine 1-phosphate from alpha-D-glucosamine 6-phosphate (route II): step 2/2. It participates in nucleotide-sugar biosynthesis; UDP-N-acetyl-alpha-D-glucosamine biosynthesis; UDP-N-acetyl-alpha-D-glucosamine from N-acetyl-alpha-D-glucosamine 1-phosphate: step 1/1. It functions in the pathway bacterial outer membrane biogenesis; LPS lipid A biosynthesis. In terms of biological role, catalyzes the last two sequential reactions in the de novo biosynthetic pathway for UDP-N-acetylglucosamine (UDP-GlcNAc). The C-terminal domain catalyzes the transfer of acetyl group from acetyl coenzyme A to glucosamine-1-phosphate (GlcN-1-P) to produce N-acetylglucosamine-1-phosphate (GlcNAc-1-P), which is converted into UDP-GlcNAc by the transfer of uridine 5-monophosphate (from uridine 5-triphosphate), a reaction catalyzed by the N-terminal domain. The sequence is that of Bifunctional protein GlmU from Cellvibrio japonicus (strain Ueda107) (Pseudomonas fluorescens subsp. cellulosa).